The primary structure comprises 783 residues: uncharacterized protein (783 aa).

Residues 1–22 (MVNTRGYTTLPNVEEPANNSQD) are disordered. Residues 1–109 (MVNTRGYTTL…SKIGNVMVMR (109 aa)) lie on the Cytoplasmic side of the membrane. The chain crosses the membrane as a helical; Signal-anchor for type II membrane protein span at residues 110–127 (RIFYIMMMSIIAALIIAS). Residues 128-783 (DRLPNGKARG…NLHGINTNEF (656 aa)) lie on the Extracellular side of the membrane. N-linked (GlcNAc...) asparagine glycosylation is found at asparagine 139 and asparagine 213. In terms of domain architecture, PA spans 241 to 333 (HNGQLNNIPV…GTGDALTPEW (93 aa)). Residue asparagine 529 is glycosylated (N-linked (GlcNAc...) asparagine).

Its subcellular location is the cell membrane. This is an uncharacterized protein from Saccharomyces cerevisiae (strain ATCC 204508 / S288c) (Baker's yeast).